Consider the following 265-residue polypeptide: Transmembrane protein 270 (265 aa).

Transmembrane regions (helical) follow at residues 72-92, 130-150, and 185-205; these read PLGQALWAGLALIQVPVWLVL, LFLSCLHGLMLVALLLVVVTW, and LYWWVETMTALTSWHLAYLIT. The tract at residues 229-265 is disordered; sequence QEVEPQEVSGSSLLPSLSASSDSESGTVLPEQETPRE. Over residues 237–253 the composition is skewed to low complexity; the sequence is SGSSLLPSLSASSDSES.

It localises to the membrane. In Homo sapiens (Human), this protein is Transmembrane protein 270.